Reading from the N-terminus, the 796-residue chain is Peroxisome proliferator-activated receptor gamma coactivator 1-alpha (796 aa).

Lys-77 is subject to N6-acetyllysine. The disordered stretch occupies residues 98–138 (PVDEDGLPSFDALTDGDVTTENEASPSSMPDGTPPPQEAEE). Residues 114–127 (DVTTENEASPSSMP) are compositionally biased toward polar residues. The short motif at 142 to 146 (LKKLL) is the LXXLL motif element. Lys-144 carries the post-translational modification N6-acetyllysine. Thr-176 is subject to Phosphothreonine; by AMPK. Residue Lys-182 is modified to N6-acetyllysine. A disordered region spans residues 211–275 (YLTTNDDPPH…NDPKGSPFEN (65 aa)). The span at 217–235 (DPPHTKPTENRNSSRDKCT) shows a compositional bias: basic and acidic residues. A compositionally biased stretch (polar residues) spans 242–258 (TQSQTQHLQAKPTTLSL). N6-acetyllysine is present on residues Lys-252, Lys-269, Lys-276, and Lys-319. Disordered regions lie at residues 288–374 (GTAG…AKRP) and 398–452 (TSQE…RKQL). Residues 291-337 (GLTPPTTPPHKANQDNPFRASPKLKPSCKTVVPPPSKKARYSESSCT) form an interaction with PPARG region. The span at 332–344 (SESSCTQGSNSTK) shows a compositional bias: polar residues. N6-acetyllysine occurs at positions 345 and 411. A mediates interaction with RNF34 region spans residues 348–796 (EQSELYAQLS…LKEAQRSLRR (449 aa)). Residues 401-412 (ELHDSRQLENKD) are compositionally biased toward basic and acidic residues. 2 stretches are compositionally biased toward polar residues: residues 413-428 (APSS…STDS) and 439-450 (VSRQVSPGSTRK). At Lys-450 the chain carries N6-acetyllysine. At Ser-538 the chain carries Phosphoserine; by AMPK. Disordered stretches follow at residues 542–597 (FNSP…SSSR), 609–637 (HRTH…SYEE), and 648–667 (YRRE…ERQR). Residues 562–577 (QRMRSRSRSFSRHRSC) are compositionally biased toward basic residues. Residues 578–597 (SRSPYSRSRSRSPGSRSSSR) show a composition bias toward low complexity. The 77-residue stretch at 675–751 (RVIYVGKIRP…TDFELYFCGR (77 aa)) folds into the RRM domain. An N6-acetyllysine mark is found at Lys-756 and Lys-777.

As to quaternary structure, homooligomer. Interacts with MYBBP1A; inhibits MYBBP1A transcriptional activation. Interacts with PRDM16, LPIN1 and PML. Interacts (via LXXLL motif) with RORA and RORC (via AF-2 motif); activates RORA and RORC transcriptional activation. Interacts with LRPPRC. Interacts with FOXO1. Interacts with NR5A2. Post-translationally, phosphorylation by AMPK in skeletal muscle increases activation of its own promoter. Phosphorylated by CLK2. In terms of processing, heavily acetylated by KAT2A/GCN5 under conditions of high nutrients, leading to inactivation of PPARGC1A. Deacetylated by SIRT1 in low nutrients/high NAD conditions, leading to its activation. Ubiquitinated. Ubiquitination by RNF34 induces proteasomal degradation.

It is found in the nucleus. Its subcellular location is the PML body. Functionally, transcriptional coactivator for steroid receptors and nuclear receptors. Greatly increases the transcriptional activity of PPARG and thyroid hormone receptor on the uncoupling protein promoter. Can regulate key mitochondrial genes that contribute to the program of adaptive thermogenesis. Plays an essential role in metabolic reprogramming in response to dietary availability through coordination of the expression of a wide array of genes involved in glucose and fatty acid metabolism. Acts as a key regulator of gluconeogenesis: stimulates hepatic gluconeogenesis by increasing the expression of gluconeogenic enzymes, and acting together with FOXO1 to promote the fasting gluconeogenic program. Induces the expression of PERM1 in the skeletal muscle in an ESRRA-dependent manner. Also involved in the integration of the circadian rhythms and energy metabolism. Required for oscillatory expression of clock genes, such as BMAL1 and NR1D1, through the coactivation of RORA and RORC, and metabolic genes, such as PDK4 and PEPCK. The sequence is that of Peroxisome proliferator-activated receptor gamma coactivator 1-alpha (PPARGC1A) from Bos taurus (Bovine).